The chain runs to 134 residues: Histone H2A (134 aa).

A compositionally biased stretch (gly residues) spans 1–11; sequence MTGGGKSGGKA. The tract at residues 1–24 is disordered; sequence MTGGGKSGGKASGSKNAQSRSSKA. 2 positions are modified to N6-acetyllysine: lysine 6 and lysine 10. Glutamine 107 is subject to N5-methylglutamine.

This sequence belongs to the histone H2A family. As to quaternary structure, the nucleosome is a histone octamer containing two molecules each of H2A, H2B, H3 and H4 assembled in one H3-H4 heterotetramer and two H2A-H2B heterodimers. The octamer wraps approximately 147 bp of DNA. Post-translationally, acetylated by ESA1 to form H2AK4ac and H2AK7ac.

The protein localises to the nucleus. It localises to the chromosome. In terms of biological role, core component of nucleosome. Nucleosomes wrap and compact DNA into chromatin, limiting DNA accessibility to the cellular machineries which require DNA as a template. Histones thereby play a central role in transcription regulation, DNA repair, DNA replication and chromosomal stability. DNA accessibility is regulated via a complex set of post-translational modifications of histones, also called histone code, and nucleosome remodeling. The polypeptide is Histone H2A (HTA1) (Gibberella zeae (strain ATCC MYA-4620 / CBS 123657 / FGSC 9075 / NRRL 31084 / PH-1) (Wheat head blight fungus)).